The primary structure comprises 618 residues: MDKNTITGLVLIGILLVGFSFLSRPSEEQIAAQKRYYDSIAVVQQQEEALRAKTEAALANEKEETAADSASLFFNATKGKEAFTTIQNNLVEITLDNKGGRVYSALLKNYMGQDKKPVVLFNGSDASMNFNFYNKKGALQTKDFYFEAVNKTDSSVTMRLAADSASYIDFIYTLKPDNYLMSFVIKATGMDGKLAASTNYVDISWSQRARQIEKGYTYENRLADLTYKYTGDDVDNLSASKDDEKSVSERLDWIAFKNQFFSSVFIAEQDFEKTTVKSKMEKQGSGYIKDYSAEMSTFFDPTGKQPTDMYFYFGPNHYKTLTALDKGREEKWELNNLVYLGWPLIRWINKWITINVFDWLSGWGLSMGIVLLLLTIMVKIVVFPATWKTYMSSAKMRVLKPKIDEINKKYPKQEDAMKKQQEVMGLYSQYGVSPMGGCLPMLLQFPILMALFMFVPSAIELRQQSFLWADDLSTYDAFITFPFHIPFLGNHLSLFCLLMTVTNILNTKYTMQQQDTGAQPQMAAMKWMMYLMPIMFLFVLNDYPSGLNYYYFISTLISVVTMIILRRTTDENKLLTELEAKKKDPKQMKKTGFAARLEAMQKQQEQLAKERANKQNKK.

The next 6 membrane-spanning stretches (helical) occupy residues 3–23 (KNTI…SFLS), 363–383 (WGLS…IVVF), 439–459 (LPML…PSAI), 478–498 (FITF…FCLL), 520–540 (PQMA…LFVL), and 545–565 (SGLN…MIIL).

Belongs to the OXA1/ALB3/YidC family. Type 1 subfamily. As to quaternary structure, interacts with the Sec translocase complex via SecD. Specifically interacts with transmembrane segments of nascent integral membrane proteins during membrane integration.

It localises to the cell membrane. Functionally, required for the insertion and/or proper folding and/or complex formation of integral membrane proteins into the membrane. Involved in integration of membrane proteins that insert both dependently and independently of the Sec translocase complex, as well as at least some lipoproteins. Aids folding of multispanning membrane proteins. The protein is Membrane protein insertase YidC of Bacteroides fragilis (strain YCH46).